The sequence spans 297 residues: 4-diphosphocytidyl-2-C-methyl-D-erythritol kinase (297 aa).

K10 is an active-site residue. 94–104 lines the ATP pocket; the sequence is PVAAGLAGGSS. The active site involves D136.

This sequence belongs to the GHMP kinase family. IspE subfamily.

It catalyses the reaction 4-CDP-2-C-methyl-D-erythritol + ATP = 4-CDP-2-C-methyl-D-erythritol 2-phosphate + ADP + H(+). It functions in the pathway isoprenoid biosynthesis; isopentenyl diphosphate biosynthesis via DXP pathway; isopentenyl diphosphate from 1-deoxy-D-xylulose 5-phosphate: step 3/6. In terms of biological role, catalyzes the phosphorylation of the position 2 hydroxy group of 4-diphosphocytidyl-2C-methyl-D-erythritol. This is 4-diphosphocytidyl-2-C-methyl-D-erythritol kinase from Shouchella clausii (strain KSM-K16) (Alkalihalobacillus clausii).